Reading from the N-terminus, the 62-residue chain is UPF0434 protein ASA_1553 (62 aa).

Belongs to the UPF0434 family.

This chain is UPF0434 protein ASA_1553, found in Aeromonas salmonicida (strain A449).